A 165-amino-acid chain; its full sequence is Cyclic pyranopterin monophosphate synthase (165 aa).

Substrate-binding positions include 79-81 (LCH) and 117-118 (ME). Asp132 is an active-site residue.

It belongs to the MoaC family. As to quaternary structure, homohexamer; trimer of dimers.

It carries out the reaction (8S)-3',8-cyclo-7,8-dihydroguanosine 5'-triphosphate = cyclic pyranopterin phosphate + diphosphate. Its pathway is cofactor biosynthesis; molybdopterin biosynthesis. In terms of biological role, catalyzes the conversion of (8S)-3',8-cyclo-7,8-dihydroguanosine 5'-triphosphate to cyclic pyranopterin monophosphate (cPMP). The protein is Cyclic pyranopterin monophosphate synthase of Chloroflexus aggregans (strain MD-66 / DSM 9485).